A 185-amino-acid polypeptide reads, in one-letter code: C-phycoerythrin beta chain (185 aa).

Positions 49 and 60 each coordinate (2R,3E)-phycoerythrobilin. Residue asparagine 71 is modified to N4-methylasparagine. (2R,3E)-phycoerythrobilin-binding residues include cysteine 81 and cysteine 166.

It belongs to the phycobiliprotein family. In terms of assembly, heterodimer of an alpha and a beta chain. In terms of processing, contains three covalently linked bilin chromophores.

The protein localises to the cellular thylakoid membrane. Light-harvesting photosynthetic bile pigment-protein from the phycobiliprotein complex. The sequence is that of C-phycoerythrin beta chain (cpeB) from Pseudanabaena tenuis (strain PCC 7409).